We begin with the raw amino-acid sequence, 176 residues long: Translation initiation factor IF-3 (176 aa).

Belongs to the IF-3 family. As to quaternary structure, monomer.

The protein localises to the cytoplasm. Functionally, IF-3 binds to the 30S ribosomal subunit and shifts the equilibrium between 70S ribosomes and their 50S and 30S subunits in favor of the free subunits, thus enhancing the availability of 30S subunits on which protein synthesis initiation begins. The sequence is that of Translation initiation factor IF-3 from Rippkaea orientalis (strain PCC 8801 / RF-1) (Cyanothece sp. (strain PCC 8801)).